The sequence spans 92 residues: Progonadoliberin-1 (92 aa).

A signal peptide spans 1–23 (METIPKLMAAVVLLTVCLEGCSS). Q24 carries the post-translational modification Pyrrolidone carboxylic acid. G33 bears the Glycine amide mark.

It belongs to the GnRH family. The precursor is cleaved by ACE, which removes the Gly-Lys-Arg peptide at the C-terminus, leading to mature hormone. The mature form of Gonadoliberin-1 is also cleaved and degraded by ACE. In terms of tissue distribution, central nervous system.

It is found in the secreted. Its function is as follows. Stimulates the secretion of gonadotropins; it stimulates the secretion of both luteinizing and follicle-stimulating hormones. The sequence is that of Progonadoliberin-1 (Gnrh1) from Rattus norvegicus (Rat).